Reading from the N-terminus, the 334-residue chain is N-acetyl-gamma-glutamyl-phosphate reductase (334 aa).

The active site involves C154.

The protein belongs to the NAGSA dehydrogenase family. Type 1 subfamily.

Its subcellular location is the cytoplasm. The enzyme catalyses N-acetyl-L-glutamate 5-semialdehyde + phosphate + NADP(+) = N-acetyl-L-glutamyl 5-phosphate + NADPH + H(+). Its pathway is amino-acid biosynthesis; L-arginine biosynthesis; N(2)-acetyl-L-ornithine from L-glutamate: step 3/4. Functionally, catalyzes the NADPH-dependent reduction of N-acetyl-5-glutamyl phosphate to yield N-acetyl-L-glutamate 5-semialdehyde. This Aliivibrio fischeri (strain ATCC 700601 / ES114) (Vibrio fischeri) protein is N-acetyl-gamma-glutamyl-phosphate reductase.